The sequence spans 522 residues: MTELKNELIRHSAADLAAKLASREVTAVEVTQAHLDRIADVDGQVNAFLHVNSEEALAVAAEVDAARAAGGSAAEELHALAGVPIAVKDLIVTIGQPTTAGSKILEGWHSPYDATVVKKLRAAKMPILGKTNLDEFAMGSSTEHSAYGPTRNPWDLDRIPGGSGGGSAAAVAAFEAPLALGTDTGGSIRQPGAVTGTVGVKPTYGAVSRYGAIAMASSLDQIGPVSRTVLDSALLQEVIGGHDPFDSTSLTDPFNDLVAAARVGNVAGMKIGIVKELHGEGYQAGVENRFNESLQLLKDAGAEIVEVSCPNLKYALGAYYLIMPSEVSSNLAKFDGVRFGMRVLPKDGPMTIERVMGATRAAGFGDEVKRRIILGTYALSAGYYDAYYGSAQKVRTLIQRDFDAAFAKADVLISPTAPTTAFKLGEKLDDPLAMYLNDVATIPANLAGIPGLSLPGGLADEDGLPVGIQLLAPARQDARLYRVGAVLESILEEKWGGPILAQAPDLKTAVLGAVSTTAGGSN.

Catalysis depends on charge relay system residues K88 and S163. S187 functions as the Acyl-ester intermediate in the catalytic mechanism.

The protein belongs to the amidase family. GatA subfamily. As to quaternary structure, heterotrimer of A, B and C subunits.

It catalyses the reaction L-glutamyl-tRNA(Gln) + L-glutamine + ATP + H2O = L-glutaminyl-tRNA(Gln) + L-glutamate + ADP + phosphate + H(+). Its function is as follows. Allows the formation of correctly charged Gln-tRNA(Gln) through the transamidation of misacylated Glu-tRNA(Gln) in organisms which lack glutaminyl-tRNA synthetase. The reaction takes place in the presence of glutamine and ATP through an activated gamma-phospho-Glu-tRNA(Gln). The sequence is that of Glutamyl-tRNA(Gln) amidotransferase subunit A from Paenarthrobacter aurescens (strain TC1).